Consider the following 573-residue polypeptide: Delta 8-(E)-sphingolipid desaturase (573 aa).

The Cytochrome b5 heme-binding domain occupies 2–77; the sequence is SRVLSRRDIA…FKIWKIGRID (76 aa). 2 residues coordinate heme: H37 and H60. A helical membrane pass occupies residues 228-248; the sequence is LFGISFYLLSLKWFAISAICL. A Histidine box-1 motif is present at residues 260-264; it reads HDAGH. Residues 273-293 traverse the membrane as a helical segment; sequence VDNIIGMTVASWIGGLSLGWW. A Histidine box-2 motif is present at residues 297 to 301; that stretch reads HNVHH. 3 helical membrane passes run 353-372, 393-413, and 422-442; these read YLYY…LSWM, LAGL…KQMP, and VMIS…SHFA. The Histidine box-3 motif lies at 481–485; the sequence is QVIHH.

The protein belongs to the fatty acid desaturase type 1 family.

It localises to the membrane. It carries out the reaction an N-acylsphing-4-enine + 2 Fe(II)-[cytochrome b5] + O2 + 2 H(+) = a (4E,8E)-4-sphinga-4,8-dienine ceramide + 2 Fe(III)-[cytochrome b5] + 2 H2O. It participates in lipid metabolism; sphingolipid metabolism. Delta(8)-fatty-acid desaturase which introduces a double bond at the 8-position in the long-chain base (LCB) of ceramides. Required for the formation of the di-unsaturated sphingoid base (E,E)-sphinga-4,8-dienine during glucosylceramide (GluCer) biosynthesis. The protein is Delta 8-(E)-sphingolipid desaturase of Kluyveromyces lactis (strain ATCC 8585 / CBS 2359 / DSM 70799 / NBRC 1267 / NRRL Y-1140 / WM37) (Yeast).